The chain runs to 213 residues: Large ribosomal subunit protein bL25 (213 aa).

Residues 191-207 (AEPTDAPTAPAAAPGAE) are compositionally biased toward low complexity. The disordered stretch occupies residues 191 to 213 (AEPTDAPTAPAAAPGAEAPKDKA).

Belongs to the bacterial ribosomal protein bL25 family. CTC subfamily. As to quaternary structure, part of the 50S ribosomal subunit; part of the 5S rRNA/L5/L18/L25 subcomplex. Contacts the 5S rRNA. Binds to the 5S rRNA independently of L5 and L18.

This is one of the proteins that binds to the 5S RNA in the ribosome where it forms part of the central protuberance. The polypeptide is Large ribosomal subunit protein bL25 (Polynucleobacter asymbioticus (strain DSM 18221 / CIP 109841 / QLW-P1DMWA-1) (Polynucleobacter necessarius subsp. asymbioticus)).